We begin with the raw amino-acid sequence, 144 residues long: D-aminoacyl-tRNA deacylase (144 aa).

Positions 136–137 (GP) match the Gly-cisPro motif, important for rejection of L-amino acids motif.

Belongs to the DTD family. Homodimer.

The protein resides in the cytoplasm. It catalyses the reaction glycyl-tRNA(Ala) + H2O = tRNA(Ala) + glycine + H(+). The enzyme catalyses a D-aminoacyl-tRNA + H2O = a tRNA + a D-alpha-amino acid + H(+). Functionally, an aminoacyl-tRNA editing enzyme that deacylates mischarged D-aminoacyl-tRNAs. Also deacylates mischarged glycyl-tRNA(Ala), protecting cells against glycine mischarging by AlaRS. Acts via tRNA-based rather than protein-based catalysis; rejects L-amino acids rather than detecting D-amino acids in the active site. By recycling D-aminoacyl-tRNA to D-amino acids and free tRNA molecules, this enzyme counteracts the toxicity associated with the formation of D-aminoacyl-tRNA entities in vivo and helps enforce protein L-homochirality. This Glaesserella parasuis serovar 5 (strain SH0165) (Haemophilus parasuis) protein is D-aminoacyl-tRNA deacylase.